Reading from the N-terminus, the 584-residue chain is Kinesin-like protein KIN-10C (584 aa).

In terms of domain architecture, Kinesin motor spans 11 to 324; that stretch reads PVRVVLRVRP…VSLAARSRHV (314 aa). 99–106 is a binding site for ATP; sequence GATGSGKT. Disordered stretches follow at residues 377–398 and 445–469; these read SMSHKKQSASGRVSGRGKAMDQ and DKTGSSLRKALSPISSNMDPQKQRT.

Belongs to the TRAFAC class myosin-kinesin ATPase superfamily. Kinesin family. KIN-10 subfamily.

The chain is Kinesin-like protein KIN-10C from Oryza sativa subsp. japonica (Rice).